The primary structure comprises 198 residues: MNESRHARLHRATSETDITLALTLDGQGRSDVDSGIGFFDHMLTALAKHGGFDLELKAKGDLHIDGHHTVEDVGIVFGQAFRQAIGDKRGIERFGHALVPLDEALCEAVVDISGRPYLAWNVVFPREKIGTMDTELFEEFFRAFAMSAHIALHLTCKSGTNAHHIAESGFKAVARALKVAVSHDPRSAGAIPSTKGVL.

Belongs to the imidazoleglycerol-phosphate dehydratase family.

Its subcellular location is the cytoplasm. It carries out the reaction D-erythro-1-(imidazol-4-yl)glycerol 3-phosphate = 3-(imidazol-4-yl)-2-oxopropyl phosphate + H2O. It participates in amino-acid biosynthesis; L-histidine biosynthesis; L-histidine from 5-phospho-alpha-D-ribose 1-diphosphate: step 6/9. The chain is Imidazoleglycerol-phosphate dehydratase from Gluconobacter oxydans (strain 621H) (Gluconobacter suboxydans).